Reading from the N-terminus, the 220-residue chain is MHRLRGCCARPRGAPLRAERSRASSRALRVLVDMDGVLADFEGGFLRKFRARFPDLPFVALEDRRGFWVSEQYGRLQPGLSEKAISIWESKDFFFELEPLPGAVEAVKQMANLQNTDVFICTSPIKMFKYCPYEKYAWVEKHFGPDFLEQIVLTRDKTVISADLLIDDRPDITGAEPHPSWEHILFTSCHNYHLQLQPPRRRLHSWADDWKAILDSKRLR.

The transit peptide at M1–A23 directs the protein to the mitochondrion. The Nucleophile role is filled by D33. 2 residues coordinate Mg(2+): D33 and D35. The active-site Proton donor is D35. 8 residues coordinate substrate: D35, F41, F67, W68, V69, W88, T122, and K157. D168 serves as a coordination point for Mg(2+).

It belongs to the 5'(3')-deoxyribonucleotidase family. Homodimer. Requires Mg(2+) as cofactor.

It is found in the mitochondrion. Dephosphorylates specifically the 5' and 2'(3')-phosphates of uracil and thymine deoxyribonucleotides, and so protects mitochondrial DNA replication from excess dTTP. Has only marginal activity towards dIMP and dGMP. The sequence is that of 5'(3')-deoxyribonucleotidase, mitochondrial (Nt5m) from Mus musculus (Mouse).